The following is a 398-amino-acid chain: tRNA(Ile)-lysidine synthase (398 aa).

25 to 30 (SGGVDS) provides a ligand contact to ATP.

It belongs to the tRNA(Ile)-lysidine synthase family.

It localises to the cytoplasm. It catalyses the reaction cytidine(34) in tRNA(Ile2) + L-lysine + ATP = lysidine(34) in tRNA(Ile2) + AMP + diphosphate + H(+). Ligates lysine onto the cytidine present at position 34 of the AUA codon-specific tRNA(Ile) that contains the anticodon CAU, in an ATP-dependent manner. Cytidine is converted to lysidine, thus changing the amino acid specificity of the tRNA from methionine to isoleucine. The sequence is that of tRNA(Ile)-lysidine synthase from Francisella tularensis subsp. tularensis (strain SCHU S4 / Schu 4).